The chain runs to 288 residues: Phenazine biosynthesis-like domain-containing protein (288 aa).

E46 is an active-site residue.

Belongs to the PhzF family. In terms of assembly, interacts with UNRIP/MAWD.

The sequence is that of Phenazine biosynthesis-like domain-containing protein (PBLD) from Homo sapiens (Human).